We begin with the raw amino-acid sequence, 238 residues long: Ankyrin repeat domain-containing protein 49 (238 aa).

Phosphoserine is present on Ser-48. ANK repeat units follow at residues Leu-77–Glu-105, Asp-106–Ala-135, Asp-139–Ala-168, and Gly-172–Asn-205.

It localises to the nucleus. Its function is as follows. May have a role in spermatogenesis where it promotes autophagy in response to serum starvation, via the NF-kappaB pathway. The protein is Ankyrin repeat domain-containing protein 49 (ANKRD49) of Bos taurus (Bovine).